We begin with the raw amino-acid sequence, 142 residues long: MVRVMATGVFDIIHLGHIHYLRESKKLGDELVVVVARDSTARKNGKVPIFDENSRLKLVSELKPVDRAILGHEDDMMKTVVEVMPDIITLGYDQKFDEADLKRKLDQIGVNSRIVRISKYDGNLNSSSMVRKKIMELIGERF.

ATP contacts are provided by residues 9 to 10 (VF), 14 to 17 (HLGH), Asp-93, and Tyr-120.

Belongs to the archaeal FAD synthase family. As to quaternary structure, homodimer. Requires a divalent metal cation as cofactor.

It catalyses the reaction FMN + ATP + H(+) = FAD + diphosphate. It participates in cofactor biosynthesis; FAD biosynthesis; FAD from FMN: step 1/1. Catalyzes the transfer of the AMP portion of ATP to flavin mononucleotide (FMN) to produce flavin adenine dinucleotide (FAD) coenzyme. This Thermoplasma acidophilum (strain ATCC 25905 / DSM 1728 / JCM 9062 / NBRC 15155 / AMRC-C165) protein is FAD synthase.